The following is a 398-amino-acid chain: ATP-dependent RNA helicase RhlB (398 aa).

Residues 9 to 37 (TRFHDFKLSNELMHAIHDLGFPYCTPIQA) carry the Q motif motif. The Helicase ATP-binding domain maps to 40 to 220 (LGYTLRGQDA…KQWTTNPAIV (181 aa)). Position 53 to 60 (53 to 60 (AQTGTGKT)) interacts with ATP. The short motif at 166-169 (DEAD) is the DEAD box element. The 151-residue stretch at 243 to 393 (DKYKLLYNLV…MPPDELLKPV (151 aa)) folds into the Helicase C-terminal domain.

The protein belongs to the DEAD box helicase family. RhlB subfamily. In terms of assembly, component of the RNA degradosome, which is a multiprotein complex involved in RNA processing and mRNA degradation.

Its subcellular location is the cytoplasm. It carries out the reaction ATP + H2O = ADP + phosphate + H(+). Its function is as follows. DEAD-box RNA helicase involved in RNA degradation. Has RNA-dependent ATPase activity and unwinds double-stranded RNA. This chain is ATP-dependent RNA helicase RhlB, found in Pseudomonas putida (strain ATCC 47054 / DSM 6125 / CFBP 8728 / NCIMB 11950 / KT2440).